The following is a 236-amino-acid chain: MIKDWLQESNYTVIFTGAGMSTESGLPDFRSANTGLWKQHDPSKIASIDTLNNNVETFIDFYRERVLKVKEYGPHQGHYILAEWEKQGLVHSIVTQNVDGFHQASGSKIVHELHGTLQKLHCQSCGKEYSSKEYVENEYHCDCGGVLRPSIILFGEMLPQEAFQTAFNDAEKADLFVVLGSSLTVSPANQIPLIAKENGAKLVIVNQDPTPYDQYADMTISDQKIGEFLRSISNEG.

A Deacetylase sirtuin-type domain is found at 1-236 (MIKDWLQESN…EFLRSISNEG (236 aa)). NAD(+) contacts are provided by alanine 18, threonine 22, phenylalanine 29, arginine 30, glutamine 96, valine 98, aspartate 99, and histidine 114. Phenylalanine 29 lines the nicotinamide pocket. Positions 98 and 99 each coordinate nicotinamide. Catalysis depends on histidine 114, which acts as the Proton acceptor. 4 residues coordinate Zn(2+): cysteine 122, cysteine 125, cysteine 141, and cysteine 143. NAD(+) is bound by residues serine 181, serine 182, asparagine 206, and isoleucine 225.

Belongs to the sirtuin family. Class U subfamily. Requires Zn(2+) as cofactor.

It localises to the cytoplasm. The enzyme catalyses N(6)-acetyl-L-lysyl-[protein] + NAD(+) + H2O = 2''-O-acetyl-ADP-D-ribose + nicotinamide + L-lysyl-[protein]. In terms of biological role, NAD-dependent protein deacetylase which modulates the activities of several enzymes which are inactive in their acetylated form. The chain is NAD-dependent protein deacetylase from Oceanobacillus iheyensis (strain DSM 14371 / CIP 107618 / JCM 11309 / KCTC 3954 / HTE831).